The chain runs to 506 residues: Cobyric acid synthase (506 aa).

A GATase cobBQ-type domain is found at 251–448 (DITIAIVQLP…LHGLFDSDAF (198 aa)). The active-site Nucleophile is the Cys332. His440 is a catalytic residue.

This sequence belongs to the CobB/CobQ family. CobQ subfamily.

The protein operates within cofactor biosynthesis; adenosylcobalamin biosynthesis. Catalyzes amidations at positions B, D, E, and G on adenosylcobyrinic A,C-diamide. NH(2) groups are provided by glutamine, and one molecule of ATP is hydrogenolyzed for each amidation. The polypeptide is Cobyric acid synthase (Salmonella agona (strain SL483)).